The primary structure comprises 268 residues: Ribosomal RNA large subunit methyltransferase E (268 aa).

Residues 1 to 60 (MKPPRSRSGSSKDTGPKRIPGKALKSASNPGENDATLDSATARTARNKTVSLRTARGRTT) form a disordered region. The segment covering 26–52 (SASNPGENDATLDSATARTARNKTVSL) has biased composition (polar residues). The S-adenosyl-L-methionine site is built by glycine 115, tryptophan 117, aspartate 133, aspartate 149, and aspartate 173. The Proton acceptor role is filled by lysine 213.

Belongs to the class I-like SAM-binding methyltransferase superfamily. RNA methyltransferase RlmE family.

The protein resides in the cytoplasm. It carries out the reaction uridine(2552) in 23S rRNA + S-adenosyl-L-methionine = 2'-O-methyluridine(2552) in 23S rRNA + S-adenosyl-L-homocysteine + H(+). Functionally, specifically methylates the uridine in position 2552 of 23S rRNA at the 2'-O position of the ribose in the fully assembled 50S ribosomal subunit. This is Ribosomal RNA large subunit methyltransferase E from Gluconobacter oxydans (strain 621H) (Gluconobacter suboxydans).